A 628-amino-acid chain; its full sequence is DNA mismatch repair protein MutL (628 aa).

Residues 350-402 (GLPFDVSESQGNDNHINNGKSRETKSERELYERRPNPFENRLMKESNSPSVGK) form a disordered region. Residues 356–368 (SESQGNDNHINNG) show a composition bias toward polar residues. Basic and acidic residues predominate over residues 369–393 (KSRETKSERELYERRPNPFENRLMK).

It belongs to the DNA mismatch repair MutL/HexB family.

In terms of biological role, this protein is involved in the repair of mismatches in DNA. It is required for dam-dependent methyl-directed DNA mismatch repair. May act as a 'molecular matchmaker', a protein that promotes the formation of a stable complex between two or more DNA-binding proteins in an ATP-dependent manner without itself being part of a final effector complex. This chain is DNA mismatch repair protein MutL, found in Wolbachia sp. subsp. Brugia malayi (strain TRS).